Consider the following 664-residue polypeptide: Semaphorin-7A (664 aa).

The first 44 residues, 1 to 44, serve as a signal peptide directing secretion; it reads MTPPPPGRAAPSAPRARVLSLPARFGLPLRLRLLLVFWVAAASA. Positions 53–488 constitute a Sema domain; sequence RISAVWKGQD…SQWEVSQVPL (436 aa). An N-linked (GlcNAc...) asparagine glycan is attached at N102. Residues C117 and C123 are joined by a disulfide bond. Residue R132 is modified to Asymmetric dimethylarginine. A disulfide bridge connects residues C140 and C149. 2 N-linked (GlcNAc...) asparagine glycosylation sites follow: N154 and N256. Cystine bridges form between C264–C364, C289–C333, C491–C509, C498–C539, C501–C516, C564–C611, and C585–C594. The interval 265–267 is interaction with integrins; the sequence is RGD. A Cell attachment site motif is present at residues 265–267; sequence RGD. The N-linked (GlcNAc...) asparagine glycan is linked to N328. Positions 542–627 constitute an Ig-like C2-type domain; that stretch reads PKPDEAPLQK…YLREAQHWEL (86 aa). N600 is a glycosylation site (N-linked (GlcNAc...) asparagine). A646 is lipidated: GPI-anchor amidated alanine. The propeptide at 647 to 664 is removed in mature form; sequence ASFWLGVLPTLILGLLVH.

This sequence belongs to the semaphorin family. Interacts with PLXNC1. Interacts with ITGA1 and ITGB1. Highly expressed in activated T-cells (at protein level). Highest expression in brain. Lower in heart, thymus, spleen, testis and ovary. The expression increases in late embryonic and postnatal stages. Detected in T-cells.

It is found in the cell membrane. Functionally, plays an important role in integrin-mediated signaling and functions both in regulating cell migration and immune responses. Promotes formation of focal adhesion complexes, activation of the protein kinase PTK2/FAK1 and subsequent phosphorylation of MAPK1 and MAPK3. Promotes production of pro-inflammatory cytokines by monocytes and macrophages. Plays an important role in modulating inflammation and T-cell-mediated immune responses. Promotes axon growth in the embryonic olfactory bulb. Promotes attachment, spreading and dendrite outgrowth in melanocytes. This Mus musculus (Mouse) protein is Semaphorin-7A (Sema7a).